A 421-amino-acid chain; its full sequence is AP-3 complex subunit mu (421 aa).

Positions 178–420 (QNKIFFDIIE…TTKAGKFQVR (243 aa)) constitute an MHD domain.

This sequence belongs to the adaptor complexes medium subunit family. Adaptor protein complex 3 (AP-3) is a heterotetramer composed of two large adaptins (delta-type subunit and beta-type subunit), a medium adaptin (mu-type subunit) and a small adaptin (sigma-type subunit).

It is found in the endosome membrane. Part of the AP-3 complex, an adaptor-related complex which is essential for the compartmentalization of the endocytic pathway. The polypeptide is AP-3 complex subunit mu (apm3) (Dictyostelium discoideum (Social amoeba)).